The sequence spans 143 residues: Small ribosomal subunit protein uS11c (143 aa).

It belongs to the universal ribosomal protein uS11 family. In terms of assembly, part of the 30S ribosomal subunit.

It localises to the plastid. It is found in the chloroplast. This is Small ribosomal subunit protein uS11c from Cenchrus americanus (Pearl millet).